Consider the following 864-residue polypeptide: Translation initiation factor IF-2 (864 aa).

The span at 140–171 (DSRSLNTKKENKLKISNKDEQNKKFNQHRESN) shows a compositional bias: basic and acidic residues. Positions 140–179 (DSRSLNTKKENKLKISNKDEQNKKFNQHRESNSFDLNHKK) are disordered. The 170-residue stretch at 364-533 (IRAPVVTIMG…LLQAEMLELK (170 aa)) folds into the tr-type G domain. Residues 373–380 (GHVDHGKT) form a G1 region. 373–380 (GHVDHGKT) is a binding site for GTP. The segment at 398-402 (GITQN) is G2. A G3 region spans residues 419 to 422 (DTPG). Residues 419 to 423 (DTPGH) and 473 to 476 (NKID) contribute to the GTP site. The tract at residues 473-476 (NKID) is G4. The segment at 509-511 (SAK) is G5.

It belongs to the TRAFAC class translation factor GTPase superfamily. Classic translation factor GTPase family. IF-2 subfamily.

It localises to the cytoplasm. One of the essential components for the initiation of protein synthesis. Protects formylmethionyl-tRNA from spontaneous hydrolysis and promotes its binding to the 30S ribosomal subunits. Also involved in the hydrolysis of GTP during the formation of the 70S ribosomal complex. In Buchnera aphidicola subsp. Acyrthosiphon pisum (strain Tuc7), this protein is Translation initiation factor IF-2.